The following is a 766-amino-acid chain: MKLATKKIKTLGKSKPDLSKKKPAKDAIRKTKPQTTSETKVTPRNPKQKVAEPVKNGKTTKKGFKKSHKEELEGLKDIDPEFYDFLKNNDKKLLDFNLLDTDDDDDEEGDEEDKEDTVTKESKDDEDDEEKYHKPSKDLEVASDESDFEVDEEDDAAAGGIQKITLNLLHQWEQQLGQANISIDIVRKVIQAFNSALASISADGADGGENKHNAAAFKVVGAAAFNGVIQLCVIHLQPAIIRLLGVRPNSSLPLHKHKKWVKVRGCLRYYLTDLIRLVEQVSSPNILGVLLKHLHQMAGMVVPFSALGKTILKRLVVLWSTGDETVRVLAFLCILKITRKQQATMLNHVLKAMYLAYVRNSKFVSPNTLPGINFMRRSLVEMFALDLNVSYQHVFLYIRQLAIHLRNAVILKKKDSFQAVYNWQFINSLRLWADLLGASANKPQLQPLIYPLVTIATGVIRLIPTAQYFPLRFHCLQTLISLAKETNTYVPVLPLIVEVLKSNTFNRKHSAVSMKPVQFTCVLRLNKGQLAENGFRDEVIEQVCGLLLEYLAHESTSLAFSDLVVPTVMAIKTYLKECRNANYARKLKQLLEKIQESARFIEQQRGKSSVTFDIKDAQAVAAWEQQLRLKRTPLDVYYASWLKTHETKKRRQAAHTDEINADYDVPKLKKLPVKTGVPVRNENGEVELFPSDSEDEGDDGLHLGSDDDDDEDVQEEEEVEVEHPKAKKAKKEKPEKQKPRPATVEDDYDEAGGAVDIVKDLDLNEW.

Residues 1 to 12 show a composition bias toward basic residues; that stretch reads MKLATKKIKTLG. Disordered stretches follow at residues 1–73, 100–154, and 674–766; these read MKLA…EELE, DTDD…DEED, and KTGV…LNEW. Residues 14 to 29 are compositionally biased toward basic and acidic residues; that stretch reads SKPDLSKKKPAKDAIR. The span at 33–42 shows a compositional bias: polar residues; sequence PQTTSETKVT. Residues 58-67 are compositionally biased toward basic residues; it reads KTTKKGFKKS. Residues 100–115 are compositionally biased toward acidic residues; that stretch reads DTDDDDDEEGDEEDKE. T101 bears the Phosphothreonine mark. Basic and acidic residues predominate over residues 130–140; the sequence is EKYHKPSKDLE. The span at 141–154 shows a compositional bias: acidic residues; it reads VASDESDFEVDEED. Phosphoserine is present on residues S143, S146, S691, S693, and S705. Residues 706-720 are compositionally biased toward acidic residues; it reads DDDDDEDVQEEEEVE. Positions 757–766 are enriched in basic and acidic residues; that stretch reads IVKDLDLNEW.

It belongs to the NOC2 family.

It is found in the nucleus. The protein is Nucleolar complex protein 2 of Drosophila melanogaster (Fruit fly).